The sequence spans 464 residues: Signal recognition particle 54 kDa protein (464 aa).

GTP is bound by residues 104–111, 184–188, and 242–245; these read GLQGSGKT, DTAGR, and TKLD.

This sequence belongs to the GTP-binding SRP family. SRP54 subfamily. In terms of assembly, part of the signal recognition particle protein translocation system, which is composed of SRP and FtsY. Archaeal SRP consists of a 7S RNA molecule of 300 nucleotides and two protein subunits: SRP54 and SRP19.

The protein resides in the cytoplasm. It catalyses the reaction GTP + H2O = GDP + phosphate + H(+). Functionally, involved in targeting and insertion of nascent membrane proteins into the cytoplasmic membrane. Binds to the hydrophobic signal sequence of the ribosome-nascent chain (RNC) as it emerges from the ribosomes. The SRP-RNC complex is then targeted to the cytoplasmic membrane where it interacts with the SRP receptor FtsY. This Halorubrum lacusprofundi (strain ATCC 49239 / DSM 5036 / JCM 8891 / ACAM 34) protein is Signal recognition particle 54 kDa protein.